The chain runs to 187 residues: Putative manganese efflux pump MntP (187 aa).

A run of 6 helical transmembrane segments spans residues 3-23 (MSATLILAFAMSMDAFAASIG), 41-61 (LIFGVIEAITPLIGWALGFFA), 62-82 (SQYILEWDHWVAFTLLLILGG), 107-129 (LLVCTAIATSLDAMAIGVGLAFL), 143-163 (ATMIMVTLGMMIGRYIGPILG), and 166-186 (AEIIGGLVLIGIGCNILYEHL).

It belongs to the MntP (TC 9.B.29) family.

It localises to the cell inner membrane. In terms of biological role, probably functions as a manganese efflux pump. The protein is Putative manganese efflux pump MntP of Pectobacterium atrosepticum (strain SCRI 1043 / ATCC BAA-672) (Erwinia carotovora subsp. atroseptica).